Consider the following 163-residue polypeptide: Intron-encoded endonuclease I-PpoI (163 aa).

In terms of assembly, homodimer. Zn(2+) is required as a cofactor.

Functionally, mediates the homing of a group I intron in the ribosomal DNA. Makes a four-base staggered cut in its ribosomal DNA target sequence. This chain is Intron-encoded endonuclease I-PpoI, found in Physarum polycephalum (Slime mold).